Reading from the N-terminus, the 445-residue chain is Protein trichome berefringence-like 7 (445 aa).

A helical; Signal-anchor for type II membrane protein membrane pass occupies residues 69 to 89 (IIAGTIVSFLVIIAGGYLYVV). The GDS motif motif lies at 188–190 (GDS). Residues 418 to 432 (DCSHWCLPGVPDIWN) carry the DCXHWCLPGXXDXWN motif motif.

It belongs to the PC-esterase family. TBL subfamily.

The protein resides in the membrane. May act as a bridging protein that binds pectin and other cell wall polysaccharides. Probably involved in maintaining esterification of pectins. May be involved in the specific O-acetylation of cell wall polymers. In Arabidopsis thaliana (Mouse-ear cress), this protein is Protein trichome berefringence-like 7 (TBL7).